The sequence spans 87 residues: Small ribosomal subunit protein bS20 (87 aa).

Residues 1–26 are disordered; sequence MANIKSAKKRAIQSEKARKHNASRRS.

The protein belongs to the bacterial ribosomal protein bS20 family.

Functionally, binds directly to 16S ribosomal RNA. This Escherichia coli O17:K52:H18 (strain UMN026 / ExPEC) protein is Small ribosomal subunit protein bS20.